The following is a 689-amino-acid chain: Translation initiation factor IF-2 (689 aa).

The disordered stretch occupies residues 70 to 107 (VRSKKNSNKKKKKGKGNQDKRQENFAGKQQAQTVETPD). Over residues 71–84 (RSKKNSNKKKKKGK) the composition is skewed to basic residues. The 170-residue stretch at 191–360 (ERPAVVTIMG…LLVSEVEEYK (170 aa)) folds into the tr-type G domain. Positions 200–207 (GHVDHGKT) are G1. Position 200–207 (200–207 (GHVDHGKT)) interacts with GTP. The G2 stretch occupies residues 225–229 (GITQH). A G3 region spans residues 246–249 (DTPG). GTP-binding positions include 246–250 (DTPGH) and 300–303 (NKMD). Positions 300 to 303 (NKMD) are G4. The interval 336–338 (SAI) is G5.

The protein belongs to the TRAFAC class translation factor GTPase superfamily. Classic translation factor GTPase family. IF-2 subfamily.

Its subcellular location is the cytoplasm. One of the essential components for the initiation of protein synthesis. Protects formylmethionyl-tRNA from spontaneous hydrolysis and promotes its binding to the 30S ribosomal subunits. Also involved in the hydrolysis of GTP during the formation of the 70S ribosomal complex. This is Translation initiation factor IF-2 from Bacillus cytotoxicus (strain DSM 22905 / CIP 110041 / 391-98 / NVH 391-98).